The chain runs to 468 residues: ATP synthase subunit beta (468 aa).

155–162 (GGAGVGKT) is an ATP binding site.

Belongs to the ATPase alpha/beta chains family. As to quaternary structure, F-type ATPases have 2 components, CF(1) - the catalytic core - and CF(0) - the membrane proton channel. CF(1) has five subunits: alpha(3), beta(3), gamma(1), delta(1), epsilon(1). CF(0) has three main subunits: a(1), b(2) and c(9-12). The alpha and beta chains form an alternating ring which encloses part of the gamma chain. CF(1) is attached to CF(0) by a central stalk formed by the gamma and epsilon chains, while a peripheral stalk is formed by the delta and b chains.

The protein localises to the cell membrane. It carries out the reaction ATP + H2O + 4 H(+)(in) = ADP + phosphate + 5 H(+)(out). Its function is as follows. Produces ATP from ADP in the presence of a proton gradient across the membrane. The catalytic sites are hosted primarily by the beta subunits. The protein is ATP synthase subunit beta of Streptococcus gordonii (strain Challis / ATCC 35105 / BCRC 15272 / CH1 / DL1 / V288).